The primary structure comprises 194 residues: Protein GrpE (194 aa).

2 stretches are compositionally biased toward basic and acidic residues: residues 1-19 (MSKE…ENTS) and 26-44 (KKEA…NQKL). The disordered stretch occupies residues 1 to 44 (MSKEEFPSEKNLDKEENTSKPKKAVKKEAAKGEETKKNNENQKL).

It belongs to the GrpE family. As to quaternary structure, homodimer.

Its subcellular location is the cytoplasm. Its function is as follows. Participates actively in the response to hyperosmotic and heat shock by preventing the aggregation of stress-denatured proteins, in association with DnaK and GrpE. It is the nucleotide exchange factor for DnaK and may function as a thermosensor. Unfolded proteins bind initially to DnaJ; upon interaction with the DnaJ-bound protein, DnaK hydrolyzes its bound ATP, resulting in the formation of a stable complex. GrpE releases ADP from DnaK; ATP binding to DnaK triggers the release of the substrate protein, thus completing the reaction cycle. Several rounds of ATP-dependent interactions between DnaJ, DnaK and GrpE are required for fully efficient folding. This chain is Protein GrpE, found in Lactobacillus acidophilus (strain ATCC 700396 / NCK56 / N2 / NCFM).